A 157-amino-acid chain; its full sequence is Cyclic pyranopterin monophosphate synthase (157 aa).

Residues 74–76 and 112–113 each bind substrate; these read MCH and ME. D127 is an active-site residue.

This sequence belongs to the MoaC family. Homohexamer; trimer of dimers.

It carries out the reaction (8S)-3',8-cyclo-7,8-dihydroguanosine 5'-triphosphate = cyclic pyranopterin phosphate + diphosphate. It participates in cofactor biosynthesis; molybdopterin biosynthesis. Its function is as follows. Catalyzes the conversion of (8S)-3',8-cyclo-7,8-dihydroguanosine 5'-triphosphate to cyclic pyranopterin monophosphate (cPMP). The polypeptide is Cyclic pyranopterin monophosphate synthase (Campylobacter jejuni subsp. jejuni serotype O:23/36 (strain 81-176)).